A 528-amino-acid chain; its full sequence is Folylpolyglutamate synthase (528 aa).

104–107 is a binding site for ATP; sequence GKGG. Residues Ser-134, Glu-208, and His-236 each coordinate Mg(2+). 2 residues coordinate ATP: Arg-351 and Asp-365.

It belongs to the folylpolyglutamate synthase family. A monovalent cation is required as a cofactor.

Its subcellular location is the mitochondrion inner membrane. It is found in the mitochondrion matrix. The protein resides in the cytoplasm. It carries out the reaction (6S)-5,6,7,8-tetrahydrofolyl-(gamma-L-Glu)(n) + L-glutamate + ATP = (6S)-5,6,7,8-tetrahydrofolyl-(gamma-L-Glu)(n+1) + ADP + phosphate + H(+). Its pathway is cofactor biosynthesis; tetrahydrofolylpolyglutamate biosynthesis. Its function is as follows. Catalyzes conversion of folates to polyglutamate derivatives allowing concentration of folate compounds in the cell and the intracellular retention of these cofactors, which are important substrates for most of the folate-dependent enzymes that are involved in one-carbon transfer reactions involved in purine, pyrimidine and amino acid synthesis. In Neurospora crassa (strain ATCC 24698 / 74-OR23-1A / CBS 708.71 / DSM 1257 / FGSC 987), this protein is Folylpolyglutamate synthase (met-6).